A 274-amino-acid chain; its full sequence is 3-methyl-2-oxobutanoate hydroxymethyltransferase (274 aa).

Mg(2+)-binding residues include Asp-49 and Asp-88. 3-methyl-2-oxobutanoate is bound by residues 49-50, Asp-88, and Lys-118; that span reads DS. Residue Glu-120 coordinates Mg(2+). Residue Glu-187 is the Proton acceptor of the active site.

This sequence belongs to the PanB family. As to quaternary structure, homodecamer; pentamer of dimers. Mg(2+) serves as cofactor.

The protein localises to the cytoplasm. The enzyme catalyses 3-methyl-2-oxobutanoate + (6R)-5,10-methylene-5,6,7,8-tetrahydrofolate + H2O = 2-dehydropantoate + (6S)-5,6,7,8-tetrahydrofolate. It functions in the pathway cofactor biosynthesis; (R)-pantothenate biosynthesis; (R)-pantoate from 3-methyl-2-oxobutanoate: step 1/2. Its function is as follows. Catalyzes the reversible reaction in which hydroxymethyl group from 5,10-methylenetetrahydrofolate is transferred onto alpha-ketoisovalerate to form ketopantoate. The sequence is that of 3-methyl-2-oxobutanoate hydroxymethyltransferase from Rhodopseudomonas palustris (strain ATCC BAA-98 / CGA009).